The primary structure comprises 506 residues: Anaerobic nitric oxide reductase transcription regulator NorR (506 aa).

Asp57 carries the 4-aspartylphosphate modification. The region spanning 187–416 is the Sigma-54 factor interaction domain; the sequence is MIGLSPAMTQ…LEHAIHRAVV (230 aa). ATP is bound by residues 215-222 and 278-287; these read GETGTGKE and ADNGTLFLDE. Residues 481–500 constitute a DNA-binding region (H-T-H motif); the sequence is WAASARALETDVANLHRLAK.

Its pathway is nitrogen metabolism; nitric oxide reduction. In terms of biological role, required for the expression of anaerobic nitric oxide (NO) reductase, acts as a transcriptional activator for at least the norVW operon. Activation also requires sigma-54. In Salmonella arizonae (strain ATCC BAA-731 / CDC346-86 / RSK2980), this protein is Anaerobic nitric oxide reductase transcription regulator NorR.